We begin with the raw amino-acid sequence, 453 residues long: Chromosomal replication initiator protein DnaA (453 aa).

The interval 1-74 (MKEKQFWNRI…GFEIYDAEIT (74 aa)) is domain I, interacts with DnaA modulators. The interval 74-113 (TPHYIFTKPQDTTSSQVEEATNLTLYDYSPKLVSIPYSDT) is domain II. The interval 114-331 (GLKEKYTFDN…GAINDITLIA (218 aa)) is domain III, AAA+ region. G158, G160, K161, and T162 together coordinate ATP. The segment at 332–453 (RVKKIKDITI…EIESIKKKIK (122 aa)) is domain IV, binds dsDNA.

This sequence belongs to the DnaA family. In terms of assembly, oligomerizes as a right-handed, spiral filament on DNA at oriC. Interacts (via domains I and III) with CcrZ.

The protein localises to the cytoplasm. CcrZ stimulates DnaA, possibly by phosphorylation of an intermediate molecule, to initiate DNA replication. In terms of biological role, plays an essential role in the initiation and regulation of chromosomal replication. ATP-DnaA binds to the origin of replication (oriC) to initiate formation of the DNA replication initiation complex once per cell cycle. Binds the DnaA box (a 9 base pair repeat at the origin) and separates the double-stranded (ds)DNA. Forms a right-handed helical filament on oriC DNA; dsDNA binds to the exterior of the filament while single-stranded (ss)DNA is stabiized in the filament's interior. The ATP-DnaA-oriC complex binds and stabilizes one strand of the AT-rich DNA unwinding element (DUE), permitting loading of DNA polymerase. After initiation quickly degrades to an ADP-DnaA complex that is not apt for DNA replication. Binds acidic phospholipids. Functionally, mutations in this gene suppress a deletion of cell cycle regulator ccrZ. The chain is Chromosomal replication initiator protein DnaA from Streptococcus pneumoniae serotype 2 (strain D39 / NCTC 7466).